A 188-amino-acid polypeptide reads, in one-letter code: Putative CC-type chemokine FPV060 (188 aa).

This sequence belongs to the intercrine beta (chemokine CC) family. Highly divergent.

The polypeptide is Putative CC-type chemokine FPV060 (Fowlpox virus (strain NVSL) (FPV)).